The primary structure comprises 285 residues: MELWPGAWTALLLLLLLLLSTLWFCSSSAKYFFKMAFYNGWILFLAILAIPVCAVRGRNVENMKILRLLLLHAKYLYGIRVEVRGAHHFPPTQPYVVVSNHQSSLDLLGMMEVLPDRCVPIAKRELLWAGSAGLACWLAGIIFIDRKRTGDAISVMSEVAQTLLTQDVRVWVFPEGTRNHNGSMLPFKRGAFHLAVQAQVPIIPIVMSSYQDFYSKKERRFTSPGRCQVRVLPPVSTEGLTPDDVPALADSVRHSMLTIFREISTDGLGGGDCLKKPGGAGEARL.

The first 28 residues, 1–28, serve as a signal peptide directing secretion; it reads MELWPGAWTALLLLLLLLLSTLWFCSSS. Topologically, residues 29–34 are lumenal; the sequence is AKYFFK. A helical membrane pass occupies residues 35–55; it reads MAFYNGWILFLAILAIPVCAV. The Cytoplasmic segment spans residues 56–124; sequence RGRNVENMKI…PDRCVPIAKR (69 aa). The short motif at 101-106 is the HXXXXD motif element; that stretch reads HQSSLD. The chain crosses the membrane as a helical span at residues 125–145; the sequence is ELLWAGSAGLACWLAGIIFID. At 146-189 the chain is on the lumenal side; that stretch reads RKRTGDAISVMSEVAQTLLTQDVRVWVFPEGTRNHNGSMLPFKR. Positions 175–178 match the EGTR motif motif; it reads EGTR.

This sequence belongs to the 1-acyl-sn-glycerol-3-phosphate acyltransferase family. As to expression, widely expressed.

The protein localises to the endoplasmic reticulum membrane. The enzyme catalyses a 1-acyl-sn-glycero-3-phosphate + an acyl-CoA = a 1,2-diacyl-sn-glycero-3-phosphate + CoA. It catalyses the reaction 1-(9Z-octadecenoyl)-sn-glycero-3-phosphate + (9Z)-octadecenoyl-CoA = 1,2-di-(9Z-octadecenoyl)-sn-glycero-3-phosphate + CoA. It carries out the reaction 1-(9Z-octadecenoyl)-sn-glycero-3-phosphate + hexadecanoyl-CoA = 1-(9Z)-octadecenoyl-2-hexadecanoyl-sn-glycero-3-phosphate + CoA. The catalysed reaction is heptadecanoyl-CoA + 1-(9Z-octadecenoyl)-sn-glycero-3-phosphate = 1-(9Z)-octadecenoyl-2-heptadecanoyl-sn-glycero-3-phosphate + CoA. The enzyme catalyses 1-(9Z-octadecenoyl)-sn-glycero-3-phosphate + octadecanoyl-CoA = 1-(9Z-octadecenoyl)-2-octadecanoyl-sn-glycero-3-phosphate + CoA. It catalyses the reaction 1-(9Z-octadecenoyl)-sn-glycero-3-phosphate + (9Z,12Z)-octadecadienoyl-CoA = 1-(9Z)-octadecenoyl-2-(9Z,12Z)-octadecadienoyl-sn-glycero-3-phosphate + CoA. It carries out the reaction 1-(9Z-octadecenoyl)-sn-glycero-3-phosphate + tetradecanoyl-CoA = 1-(9Z)-octadecenoyl-2-tetradecanoyl-sn-glycero-3-phosphate + CoA. The catalysed reaction is pentadecanoyl-CoA + 1-(9Z-octadecenoyl)-sn-glycero-3-phosphate = 1-(9Z)-octadecenoyl-2-pentadecanoyl-sn-glycero-3-phosphate + CoA. The enzyme catalyses 1-hexadecanoyl-sn-glycero-3-phosphate + (9Z)-octadecenoyl-CoA = 1-hexadecanoyl-2-(9Z-octadecenoyl)-sn-glycero-3-phosphate + CoA. It catalyses the reaction 1-(9Z,12Z,15Z)-octadecatrienoyl-sn-glycero-3-phosphate + (9Z)-octadecenoyl-CoA = 1-(9Z,12Z,15Z)-octadecatrienoyl-2-(9Z)-octadecenoyl-sn-glycero-3-phosphate + CoA. It carries out the reaction 1-(6Z,9Z,12Z-octadecatrienoyl)-sn-glycero-3-phosphate + (9Z)-octadecenoyl-CoA = (6Z,9Z,12Z)-octadecatrienoyl-2-(9Z)-octadecenoyl-sn-glycero-3-phosphate + CoA. The catalysed reaction is 1-eicosanoyl-sn-glycero-3-phosphate + (9Z)-octadecenoyl-CoA = 1-eicosanoyl-2-(9Z)-octadecenoyl-sn-glycero-3-phosphate + CoA. The enzyme catalyses 1-tetradecanoyl-sn-glycerol 3-phosphate + (9Z)-octadecenoyl-CoA = 1-tetradecanoyl-2-(9Z)-octadecenoyl-sn-glycero-3-phosphate + CoA. It catalyses the reaction 1-(9Z-octadecenoyl)-sn-glycero-3-phosphate + (5Z,8Z,11Z,14Z)-eicosatetraenoyl-CoA = 1-(9Z)-octadecenoyl-2-(5Z,8Z,11Z,14Z)-eicosatetraenoyl-sn-glycero-3-phosphate + CoA. It carries out the reaction 1-(9Z-octadecenoyl)-sn-glycero-3-phosphate + dodecanoyl-CoA = 1-(9Z)-octadecenoyl-2-dodecanoyl-sn-glycero-3-phosphate + CoA. The catalysed reaction is (6Z)-octadecenoyl-CoA + 1-(9Z-octadecenoyl)-sn-glycero-3-phosphate = 1-(9Z)-octadecenoyl-2-(6Z)-octadecenoyl-sn-glycero-3-phosphate + CoA. The enzyme catalyses (11Z)-octadecenoyl-CoA + 1-(9Z-octadecenoyl)-sn-glycero-3-phosphate = 1-(9Z)-octadecenoyl-2-(11Z)-octadecenoyl-sn-glycero-3-phosphate + CoA. It catalyses the reaction (9Z)-hexadecenoyl-CoA + 1-(9Z-octadecenoyl)-sn-glycero-3-phosphate = 1-(9Z-octadecenoyl)-2-(9Z-hexadecenoyl)-sn-glycero-3-phosphate + CoA. It participates in phospholipid metabolism; CDP-diacylglycerol biosynthesis; CDP-diacylglycerol from sn-glycerol 3-phosphate: step 2/3. In terms of biological role, converts 1-acyl-sn-glycerol-3-phosphate (lysophosphatidic acid or LPA) into 1,2-diacyl-sn-glycerol-3-phosphate (phosphatidic acid or PA) by incorporating an acyl moiety at the sn-2 position of the glycerol backbone. In Mus musculus (Mouse), this protein is 1-acyl-sn-glycerol-3-phosphate acyltransferase alpha (Agpat1).